A 172-amino-acid polypeptide reads, in one-letter code: Large ribosomal subunit protein uL10 (172 aa).

The protein belongs to the universal ribosomal protein uL10 family. As to quaternary structure, part of the ribosomal stalk of the 50S ribosomal subunit. The N-terminus interacts with L11 and the large rRNA to form the base of the stalk. The C-terminus forms an elongated spine to which L12 dimers bind in a sequential fashion forming a multimeric L10(L12)X complex.

In terms of biological role, forms part of the ribosomal stalk, playing a central role in the interaction of the ribosome with GTP-bound translation factors. This chain is Large ribosomal subunit protein uL10, found in Rhodospirillum rubrum (strain ATCC 11170 / ATH 1.1.1 / DSM 467 / LMG 4362 / NCIMB 8255 / S1).